The primary structure comprises 376 residues: Transcription initiation factor IIA subunit 1 (376 aa).

At Ala2 the chain carries N-acetylalanine. Composition is skewed to low complexity over residues Gln69–Gln79 and Gln89–Val105. 3 disordered regions span residues Gln69–Ile107, Ala246–Thr265, and Asp274–Phe329. Residues Ser280, Ser281, Ser316, and Ser321 each carry the phosphoserine; by TAF1 modification. Positions Ser280–Phe329 are enriched in acidic residues. The DNA site is built by His343 and Arg344.

This sequence belongs to the TFIIA subunit 1 family. In terms of assembly, TFIIA is a heterodimer of the large unprocessed subunit 1 and a small subunit gamma. It was originally believed to be a heterotrimer of an alpha (p35), a beta (p19) and a gamma subunit (p12). TFIIA forms a complex with TBP. Part of TBP-based Pol II pre-initiation complex (PIC), in which Pol II core assembles with general transcription factors and other specific initiation factors including GTF2E1, GTF2E2, GTF2F1, GTF2F2, TCEA1, ERCC2, ERCC3, GTF2H2, GTF2H3, GTF2H4, GTF2H5, GTF2A1, GTF2A2, GTF2B and TBP; this large multi-subunit PIC complex mediates DNA unwinding and targets Pol II core to the transcription start site where the first phosphodiester bond forms. In terms of processing, the alpha and beta subunits are postranslationally produced from the precursor formby TASP1. The cleavage promotes proteasomal degradation.

The protein localises to the nucleus. Functionally, TFIIA is a component of the transcription machinery of RNA polymerase II and plays an important role in transcriptional activation. TFIIA in a complex with TBP mediates transcriptional activity. This Pongo abelii (Sumatran orangutan) protein is Transcription initiation factor IIA subunit 1 (GTF2A1).